Reading from the N-terminus, the 204-residue chain is Large ribosomal subunit protein bL9 (204 aa).

A disordered region spans residues 180-204 (DDIGGAASDDEGDAPAAAADEEESK). Residues 187 to 204 (SDDEGDAPAAAADEEESK) are compositionally biased toward acidic residues.

This sequence belongs to the bacterial ribosomal protein bL9 family.

Binds to the 23S rRNA. This chain is Large ribosomal subunit protein bL9, found in Ruegeria sp. (strain TM1040) (Silicibacter sp.).